Consider the following 389-residue polypeptide: Flap endonuclease 1 (389 aa).

An N-domain region spans residues M1 to R110. D35 is a Mg(2+) binding site. Residues R48 and R76 each contribute to the DNA site. Position 92 (D92) interacts with Mg(2+). The tract at residues L103 to G124 is disordered. An I-domain region spans residues D128–H259. Mg(2+) contacts are provided by E164, E166, D185, and D187. E164 lines the DNA pocket. DNA is bound by residues G237 and D239. D239 contacts Mg(2+). The interaction with PCNA stretch occupies residues S350–F358. The segment at P362–K389 is disordered. Residues A367–K389 are compositionally biased toward basic residues.

This sequence belongs to the XPG/RAD2 endonuclease family. FEN1 subfamily. As to quaternary structure, interacts with PCNA. Three molecules of FEN1 bind to one PCNA trimer with each molecule binding to one PCNA monomer. PCNA stimulates the nuclease activity without altering cleavage specificity. It depends on Mg(2+) as a cofactor. Post-translationally, phosphorylated. Phosphorylation upon DNA damage induces relocalization to the nuclear plasma.

Its subcellular location is the nucleus. It is found in the nucleolus. The protein resides in the nucleoplasm. The protein localises to the mitochondrion. Functionally, structure-specific nuclease with 5'-flap endonuclease and 5'-3' exonuclease activities involved in DNA replication and repair. During DNA replication, cleaves the 5'-overhanging flap structure that is generated by displacement synthesis when DNA polymerase encounters the 5'-end of a downstream Okazaki fragment. It enters the flap from the 5'-end and then tracks to cleave the flap base, leaving a nick for ligation. Also involved in the long patch base excision repair (LP-BER) pathway, by cleaving within the apurinic/apyrimidinic (AP) site-terminated flap. Acts as a genome stabilization factor that prevents flaps from equilibrating into structures that lead to duplications and deletions. Also possesses 5'-3' exonuclease activity on nicked or gapped double-stranded DNA, and exhibits RNase H activity. Also involved in replication and repair of rDNA and in repairing mitochondrial DNA. This Phytophthora infestans (strain T30-4) (Potato late blight agent) protein is Flap endonuclease 1.